The following is a 422-amino-acid chain: UDP-N-acetylglucosamine 1-carboxyvinyltransferase (422 aa).

22-23 (KN) lines the phosphoenolpyruvate pocket. Arg-94 contributes to the UDP-N-acetyl-alpha-D-glucosamine binding site. Cys-118 (proton donor) is an active-site residue. A 2-(S-cysteinyl)pyruvic acid O-phosphothioketal modification is found at Cys-118. Residues 123-127 (RPVDL), 163-166 (KVSV), Asp-308, and Ile-330 contribute to the UDP-N-acetyl-alpha-D-glucosamine site.

The protein belongs to the EPSP synthase family. MurA subfamily.

The protein localises to the cytoplasm. The catalysed reaction is phosphoenolpyruvate + UDP-N-acetyl-alpha-D-glucosamine = UDP-N-acetyl-3-O-(1-carboxyvinyl)-alpha-D-glucosamine + phosphate. Its pathway is cell wall biogenesis; peptidoglycan biosynthesis. Its function is as follows. Cell wall formation. Adds enolpyruvyl to UDP-N-acetylglucosamine. This chain is UDP-N-acetylglucosamine 1-carboxyvinyltransferase, found in Yersinia enterocolitica serotype O:8 / biotype 1B (strain NCTC 13174 / 8081).